A 336-amino-acid chain; its full sequence is C2H2 finger domain transcription factor mtfA (336 aa).

The disordered stretch occupies residues 1–245; it reads MDVASLISPS…PSPGHQQMIS (245 aa). 2 stretches are compositionally biased toward polar residues: residues 7-29 and 36-56; these read ISPS…SSAS and EQST…YSRT. Over residues 136–149 the composition is skewed to low complexity; the sequence is SPSTSSVSAASSSA. The segment covering 168 to 181 has biased composition (polar residues); it reads TDRSSISSQGSVQH. Over residues 182 to 210 the composition is skewed to low complexity; the sequence is AASAPYASPAPSVSSFSSPIEPSTPSTAA. Positions 216 to 245 are enriched in polar residues; it reads PAPNTFQNPSPFPQTSTASLPSPGHQQMIS. C2H2-type zinc fingers lie at residues 272–294 and 300–325; these read YICR…SHSH and FRCT…RGCH.

The protein resides in the nucleus. Its function is as follows. Transcription factor that controls morphogenesis and virulence. Acts as a positive regulator of gliotixin and protease production. This Aspergillus fumigatus (strain CBS 144.89 / FGSC A1163 / CEA10) (Neosartorya fumigata) protein is C2H2 finger domain transcription factor mtfA.